We begin with the raw amino-acid sequence, 93 residues long: Small ribosomal subunit protein uS19 (93 aa).

It belongs to the universal ribosomal protein uS19 family.

Its function is as follows. Protein S19 forms a complex with S13 that binds strongly to the 16S ribosomal RNA. The chain is Small ribosomal subunit protein uS19 from Parafrankia sp. (strain EAN1pec).